A 56-amino-acid chain; its full sequence is MASKSTELRPIVKLKSTAGTGYTYVTRKNRRNDPDRMVLRKYDPVVRKHVDFREER.

The protein belongs to the bacterial ribosomal protein bL33 family.

The protein is Large ribosomal subunit protein bL33A of Nocardia farcinica (strain IFM 10152).